Here is a 320-residue protein sequence, read N- to C-terminus: 4-diphosphocytidyl-2-C-methyl-D-erythritol kinase (320 aa).

Residue Lys-20 is part of the active site. Residue 112–122 coordinates ATP; sequence PVAGGMGGGSA. Residue Asp-154 is part of the active site.

This sequence belongs to the GHMP kinase family. IspE subfamily.

The enzyme catalyses 4-CDP-2-C-methyl-D-erythritol + ATP = 4-CDP-2-C-methyl-D-erythritol 2-phosphate + ADP + H(+). It functions in the pathway isoprenoid biosynthesis; isopentenyl diphosphate biosynthesis via DXP pathway; isopentenyl diphosphate from 1-deoxy-D-xylulose 5-phosphate: step 3/6. Its function is as follows. Catalyzes the phosphorylation of the position 2 hydroxy group of 4-diphosphocytidyl-2C-methyl-D-erythritol. This chain is 4-diphosphocytidyl-2-C-methyl-D-erythritol kinase, found in Pseudarthrobacter chlorophenolicus (strain ATCC 700700 / DSM 12829 / CIP 107037 / JCM 12360 / KCTC 9906 / NCIMB 13794 / A6) (Arthrobacter chlorophenolicus).